Consider the following 84-residue polypeptide: Beta-defensin 119 (84 aa).

The signal sequence occupies residues 1–21 (MKLLYLFLAILLAIEEPVISG). 2 disulfides stabilise this stretch: Cys35-Cys49 and Cys39-Cys56.

This sequence belongs to the beta-defensin family.

Its subcellular location is the secreted. In terms of biological role, has antibacterial activity. In Pan troglodytes (Chimpanzee), this protein is Beta-defensin 119 (DEFB119).